Consider the following 365-residue polypeptide: NADH-quinone oxidoreductase subunit H (365 aa).

8 helical membrane-spanning segments follow: residues 27–47, 99–119, 133–153, 168–188, 206–226, 268–288, 294–314, and 329–349; these read LLLI…LTFA, FLFL…WAVV, ALLY…IAGW, AAQV…VLMM, FLNW…ISGV, ILVA…PVDI, IPGV…FLWF, and LGWK…GAVM.

The protein belongs to the complex I subunit 1 family. NDH-1 is composed of 14 different subunits. Subunits NuoA, H, J, K, L, M, N constitute the membrane sector of the complex.

It is found in the cell inner membrane. It carries out the reaction a quinone + NADH + 5 H(+)(in) = a quinol + NAD(+) + 4 H(+)(out). Its function is as follows. NDH-1 shuttles electrons from NADH, via FMN and iron-sulfur (Fe-S) centers, to quinones in the respiratory chain. The immediate electron acceptor for the enzyme in this species is believed to be ubiquinone. Couples the redox reaction to proton translocation (for every two electrons transferred, four hydrogen ions are translocated across the cytoplasmic membrane), and thus conserves the redox energy in a proton gradient. This subunit may bind ubiquinone. The protein is NADH-quinone oxidoreductase subunit H of Nitrosomonas eutropha (strain DSM 101675 / C91 / Nm57).